Here is a 1117-residue protein sequence, read N- to C-terminus: Rhoptry apical surface protein 3 (1117 aa).

Residues 1–12 (MENRPRQQTSGH) show a composition bias toward polar residues. Disordered stretches follow at residues 1-27 (MENRPRQQTSGHDCSLGTGDDLSSRPG), 47-243 (NHER…SHFT), 258-301 (DSER…NKGI), 325-398 (SDFK…SLST), 415-442 (WNHASPGEGEATEAAGASVSGSSSFLAA), 490-572 (AEAV…ESEL), 600-619 (RPLLSGPPEEEAGNAEELRS), and 654-736 (QDGT…RLQG). Composition is skewed to basic and acidic residues over residues 83 to 100 (DSNHTVEHEVIKEEDSQK), 197 to 209 (TPLRRVGEERHVS), and 275 to 300 (MKPKELDKEAERKQEQLRSSKGDNKG). 2 stretches are compositionally biased toward low complexity: residues 418–442 (ASPGEGEATEAAGASVSGSSSFLAA) and 490–508 (AEAVAAVGQSSSDSSGDSS). A compositionally biased stretch (basic and acidic residues) spans 510–520 (ESDHSGRERSR). Residues 530–540 (NEITTMRSQRS) are compositionally biased toward polar residues. Residues 546-555 (FSREPERESD) show a composition bias toward basic and acidic residues. The span at 557-569 (GEMTPTGETSGSE) shows a compositional bias: polar residues. Over residues 724-734 (DADRKQEEKRL) the composition is skewed to basic and acidic residues. A BSD domain is found at 752-788 (MLSVDRRLRKLHSDTAVRRMGETEFWKLYFYQVFLLM). Over residues 829–838 (QTSGFTESDT) the composition is skewed to polar residues. Disordered stretches follow at residues 829–848 (QTSGFTESDTSSPSPSYGFA), 858–891 (IIPPTGLPDNTEEGEPLSFGGVSLEPKDEEAPEQ), 909–964 (RSPS…GDSP), 1031–1066 (SSSQVNGRVSTSRGTMGEDRHQDQQGDNRLEGPSHL), and 1095–1117 (GTCGDTHQPGLACKGKEVQGARA). Over residues 839-848 (SSPSPSYGFA) the composition is skewed to low complexity. Positions 909–931 (RSPSLSSSSSGTTSVSARGTGSS) are enriched in low complexity. A compositionally biased stretch (polar residues) spans 1031–1044 (SSSQVNGRVSTSRG). Basic and acidic residues-rich tracts occupy residues 1046–1062 (MGEDRHQDQQGDNRLEG) and 1108–1117 (KGKEVQGARA).

In terms of assembly, interacts with RASP2.

It localises to the cytoplasmic vesicle. Its subcellular location is the secretory vesicle. It is found in the rhoptry membrane. This chain is Rhoptry apical surface protein 3, found in Toxoplasma gondii (strain ATCC 50853 / GT1).